The primary structure comprises 293 residues: Small ribosomal subunit protein uS5 (293 aa).

Residues 1-56 form a disordered region; that stretch reads MADDAGAAGGPGGPGGPGMGGRGGFRGGFGSGVRGRGRGRGRGRGRGRGARGGKAE. Position 2 is an N-acetylalanine (Ala2). Gly residues predominate over residues 7-34; it reads AAGGPGGPGGPGMGGRGGFRGGFGSGVR. The segment covering 35–51 has biased composition (basic residues); that stretch reads GRGRGRGRGRGRGRGAR. Residues Lys54 and Lys58 each participate in a glycyl lysine isopeptide (Lys-Gly) (interchain with G-Cter in ubiquitin) cross-link. Residues 102 to 165 form the S5 DRBM domain; it reads LKDEVLKIMP…ILAKLSIVPV (64 aa). At Thr252 the chain carries Phosphothreonine. Residue Lys263 is modified to N6-acetyllysine. Position 264 is a phosphoserine (Ser264). Thr270 is modified (phosphothreonine). Lys275 bears the N6-acetyllysine; alternate mark. A Glycyl lysine isopeptide (Lys-Gly) (interchain with G-Cter in SUMO1); alternate cross-link involves residue Lys275. Lys275 participates in a covalent cross-link: Glycyl lysine isopeptide (Lys-Gly) (interchain with G-Cter in SUMO2); alternate. Residue Lys275 forms a Glycyl lysine isopeptide (Lys-Gly) (interchain with G-Cter in ubiquitin); alternate linkage. Ser281 is modified (phosphoserine).

It belongs to the universal ribosomal protein uS5 family. In terms of assembly, component of the small ribosomal subunit. Interacts with zinc finger protein ZNF277 (via zinc-finger domains); the interaction is direct; the interaction is extra-ribosomal. Interaction with ZNF277 competes with the binding of RPS2 to protein arginine methyltransferase PRMT3. Post-translationally, citrullinated by PADI4 in the Arg/Gly-rich region. In terms of processing, asymmetric arginine dimethylation by PRMT3 occurs at multiple sites in the Arg/Gly-rich region. Monoubiquitinated at Lys-54 and Lys-58 by RNF10 when a ribosome has stalled during translation, leading to its degradation by the proteasome. Deubiquitinated at Lys-54 and Lys-58 by USP10, preventing degradation by the proteasome and promoting 40S ribosome subunit recycling following ribosome dissociation.

The protein resides in the cytoplasm. It localises to the nucleus. Its subcellular location is the nucleolus. Its function is as follows. Component of the ribosome, a large ribonucleoprotein complex responsible for the synthesis of proteins in the cell. The small ribosomal subunit (SSU) binds messenger RNAs (mRNAs) and translates the encoded message by selecting cognate aminoacyl-transfer RNA (tRNA) molecules. The large subunit (LSU) contains the ribosomal catalytic site termed the peptidyl transferase center (PTC), which catalyzes the formation of peptide bonds, thereby polymerizing the amino acids delivered by tRNAs into a polypeptide chain. The nascent polypeptides leave the ribosome through a tunnel in the LSU and interact with protein factors that function in enzymatic processing, targeting, and the membrane insertion of nascent chains at the exit of the ribosomal tunnel. Plays a role in the assembly and function of the 40S ribosomal subunit. Mutations in this protein affects the control of translational fidelity. Involved in nucleolar processing of pre-18S ribosomal RNA and ribosome assembly. The polypeptide is Small ribosomal subunit protein uS5 (RPS2) (Bos taurus (Bovine)).